A 219-amino-acid chain; its full sequence is Putative germin-like protein 8-1 (219 aa).

The signal sequence occupies residues 1–23 (MASFISFLLLAALIGMASWQAIA). An intrachain disulfide couples C33 to C48. N-linked (GlcNAc...) asparagine glycosylation is found at N53 and N79. The Cupin type-1 domain occupies 63–215 (AMLDKPRDTA…AFQVDKKIID (153 aa)). Mn(2+) contacts are provided by H112, H114, E119, and H160.

The protein belongs to the germin family. As to quaternary structure, oligomer (believed to be a pentamer but probably hexamer).

It is found in the secreted. The protein resides in the extracellular space. The protein localises to the apoplast. Plays a role in broad-spectrum disease resistance. Probably has no oxalate oxidase activity even if the active site is conserved. The sequence is that of Putative germin-like protein 8-1 from Oryza sativa subsp. japonica (Rice).